The primary structure comprises 209 residues: GTP cyclohydrolase 1 (209 aa).

Positions 89, 92, and 163 each coordinate Zn(2+).

The protein belongs to the GTP cyclohydrolase I family. As to quaternary structure, toroid-shaped homodecamer, composed of two pentamers of five dimers.

The catalysed reaction is GTP + H2O = 7,8-dihydroneopterin 3'-triphosphate + formate + H(+). It participates in cofactor biosynthesis; 7,8-dihydroneopterin triphosphate biosynthesis; 7,8-dihydroneopterin triphosphate from GTP: step 1/1. The sequence is that of GTP cyclohydrolase 1 from Sulfolobus acidocaldarius (strain ATCC 33909 / DSM 639 / JCM 8929 / NBRC 15157 / NCIMB 11770).